A 224-amino-acid polypeptide reads, in one-letter code: 7-cyano-7-deazaguanine synthase (224 aa).

8 to 18 contacts ATP; sequence VSGGADSATVL. The Zn(2+) site is built by cysteine 189, cysteine 199, cysteine 202, and cysteine 205.

The protein belongs to the QueC family. Zn(2+) serves as cofactor.

It catalyses the reaction 7-carboxy-7-deazaguanine + NH4(+) + ATP = 7-cyano-7-deazaguanine + ADP + phosphate + H2O + H(+). It participates in purine metabolism; 7-cyano-7-deazaguanine biosynthesis. Catalyzes the ATP-dependent conversion of 7-carboxy-7-deazaguanine (CDG) to 7-cyano-7-deazaguanine (preQ(0)). The sequence is that of 7-cyano-7-deazaguanine synthase from Rickettsia felis (strain ATCC VR-1525 / URRWXCal2) (Rickettsia azadi).